The chain runs to 138 residues: Large ribosomal subunit protein bL19 (138 aa).

This sequence belongs to the bacterial ribosomal protein bL19 family.

This protein is located at the 30S-50S ribosomal subunit interface and may play a role in the structure and function of the aminoacyl-tRNA binding site. The chain is Large ribosomal subunit protein bL19 from Rickettsia massiliae (strain Mtu5).